Here is a 443-residue protein sequence, read N- to C-terminus: MESLASLYKNHIATLQERTRDALARFKLDALLIHSGELFNVFLDDHPYPFKVNPQFKAWVPVTQVPNCWLLVDGVNKPKLWFYLPVDYWHNVEPLPTSFWTEDVEVIALPKADGIGSLLPAARGNIGYIGPVPERALQLGIEASNINPKGVIDYLHYYRSFKTEYELACMREAQKMAVNGHRAAEEAFRSGMSEFDINIAYLTATGHRDTDVPYSNIVALNEHAAVLHYTKLDHQAPEEMRSFLLDAGAEYNGYAADLTRTWSAKSDNDYAQLVKDVNDEQLALIATMKAGVSYVDYHIQFHQRIAKLLRKHQIITDMSEEAMVENDLTGPFMPHGIGHPLGLQVHDVAGFMQDDSGTHLAAPAKYPYLRCTRILQPGMVLTIEPGIYFIESLLAPWREGQFSKHFNWQKIEALKPFGGIRIEDNVVIHENNVENMTRDLKLA.

The Mn(2+) site is built by D246, D257, H339, E384, and E423.

The protein belongs to the peptidase M24B family. Bacterial-type prolidase subfamily. The cofactor is Mn(2+).

It catalyses the reaction Xaa-L-Pro dipeptide + H2O = an L-alpha-amino acid + L-proline. In terms of biological role, splits dipeptides with a prolyl residue in the C-terminal position. The polypeptide is Xaa-Pro dipeptidase (Escherichia coli (strain 55989 / EAEC)).